Reading from the N-terminus, the 285-residue chain is Small ribosomal subunit protein uS2 (285 aa).

Positions 262–285 (NDDWNEDDTAPAAPGAASWGGAAF) are disordered. Residues 271–285 (APAAPGAASWGGAAF) show a composition bias toward low complexity.

It belongs to the universal ribosomal protein uS2 family. In terms of assembly, component of the small ribosomal subunit. Mature ribosomes consist of a small (40S) and a large (60S) subunit. The 40S subunit contains about 33 different proteins and 1 molecule of RNA (18S). The 60S subunit contains about 49 different proteins and 3 molecules of RNA (28S, 5.8S and 5S). Interacts with ribosomal protein S21.

Its subcellular location is the cytoplasm. In terms of biological role, required for the assembly and/or stability of the 40S ribosomal subunit. Required for the processing of the 20S rRNA-precursor to mature 18S rRNA in a late step of the maturation of 40S ribosomal subunits. In Anopheles gambiae (African malaria mosquito), this protein is Small ribosomal subunit protein uS2.